We begin with the raw amino-acid sequence, 289 residues long: Energy-coupling factor transporter ATP-binding protein EcfA2 (289 aa).

An ABC transporter domain is found at 3-246 (IRFKQVDFTY…TQWLKEKQLG (244 aa)). 40–47 (GHTGSGKS) contributes to the ATP binding site.

Belongs to the ABC transporter superfamily. Energy-coupling factor EcfA family. In terms of assembly, forms a stable energy-coupling factor (ECF) transporter complex composed of 2 membrane-embedded substrate-binding proteins (S component), 2 ATP-binding proteins (A component) and 2 transmembrane proteins (T component).

The protein localises to the cell membrane. ATP-binding (A) component of a common energy-coupling factor (ECF) ABC-transporter complex. Unlike classic ABC transporters this ECF transporter provides the energy necessary to transport a number of different substrates. This Enterococcus faecalis (strain ATCC 700802 / V583) protein is Energy-coupling factor transporter ATP-binding protein EcfA2.